A 931-amino-acid polypeptide reads, in one-letter code: Protein translocase subunit SecA (931 aa).

ATP contacts are provided by residues glutamine 87, 105 to 109, and aspartate 523; that span reads GEGKT. Residues cysteine 915, cysteine 917, cysteine 926, and histidine 927 each coordinate Zn(2+).

This sequence belongs to the SecA family. As to quaternary structure, monomer and homodimer. Part of the essential Sec protein translocation apparatus which comprises SecA, SecYEG and auxiliary proteins SecDF-YajC and YidC. It depends on Zn(2+) as a cofactor.

The protein resides in the cell inner membrane. It is found in the cytoplasm. It carries out the reaction ATP + H2O + cellular proteinSide 1 = ADP + phosphate + cellular proteinSide 2.. Functionally, part of the Sec protein translocase complex. Interacts with the SecYEG preprotein conducting channel. Has a central role in coupling the hydrolysis of ATP to the transfer of proteins into and across the cell membrane, serving both as a receptor for the preprotein-SecB complex and as an ATP-driven molecular motor driving the stepwise translocation of polypeptide chains across the membrane. This Xanthobacter autotrophicus (strain ATCC BAA-1158 / Py2) protein is Protein translocase subunit SecA.